Reading from the N-terminus, the 401-residue chain is Glutamyl-tRNA reductase (401 aa).

Residues 49–52, serine 92, 97–99, and glutamine 103 contribute to the substrate site; these read TCNR and END. The active-site Nucleophile is the cysteine 50. 171–176 lines the NADP(+) pocket; that stretch reads GNGKMA.

This sequence belongs to the glutamyl-tRNA reductase family. Homodimer.

It catalyses the reaction (S)-4-amino-5-oxopentanoate + tRNA(Glu) + NADP(+) = L-glutamyl-tRNA(Glu) + NADPH + H(+). It functions in the pathway porphyrin-containing compound metabolism; protoporphyrin-IX biosynthesis; 5-aminolevulinate from L-glutamyl-tRNA(Glu): step 1/2. In terms of biological role, catalyzes the NADPH-dependent reduction of glutamyl-tRNA(Glu) to glutamate 1-semialdehyde (GSA). The sequence is that of Glutamyl-tRNA reductase from Picrophilus torridus (strain ATCC 700027 / DSM 9790 / JCM 10055 / NBRC 100828 / KAW 2/3).